A 727-amino-acid chain; its full sequence is E3 SUMO-protein ligase pli1 (727 aa).

Positions 18–52 (ETGLIIPQLKDILRVFGLRLSGTKAELITRIKQLI) constitute an SAP domain. In terms of domain architecture, PINIT spans 108–261 (YSRPFAPVVH…SVVVCFVKVY (154 aa)). An SP-RING-type zinc finger spans residues 290–371 (QDADIIATST…MQHILESTPS (82 aa)). Positions 321, 323, 344, and 347 each coordinate Zn(2+). 2 positions are modified to phosphoserine: serine 395 and serine 396. Disordered regions lie at residues 408-558 (ELSD…TQHS) and 706-727 (QSNN…QSID). Composition is skewed to polar residues over residues 417–435 (TMAN…THNS) and 459–494 (VATS…NRST). The segment covering 546–558 (SQQNNNNSNTQHS) has biased composition (low complexity).

Belongs to the PIAS family. As to quaternary structure, interacts with hus5/ubc9.

It is found in the nucleus. It functions in the pathway protein modification; protein sumoylation. In terms of biological role, acts as an E3 ligase mediating SUMO/Smt3 attachment to other proteins. Involved in the maintenance of the centromere and in telomere length. Regulates recombination, via extension sumoylation, particularly within the heterochromatin repeats. In Schizosaccharomyces pombe (strain 972 / ATCC 24843) (Fission yeast), this protein is E3 SUMO-protein ligase pli1 (pli1).